Consider the following 107-residue polypeptide: Cell cycle protein GpsB (107 aa).

Positions 32–65 form a coiled coil; it reads LDNVIQDYETYISEIEELKAEIERLKNQNTHPKS. Residues 57–80 are disordered; sequence KNQNTHPKSPSTENRHAMVQPTRV. A compositionally biased stretch (polar residues) spans 58-68; that stretch reads NQNTHPKSPST.

Belongs to the GpsB family. In terms of assembly, forms polymers through the coiled coil domains. Interacts with PBP1, MreC and EzrA.

It localises to the cytoplasm. In terms of biological role, divisome component that associates with the complex late in its assembly, after the Z-ring is formed, and is dependent on DivIC and PBP2B for its recruitment to the divisome. Together with EzrA, is a key component of the system that regulates PBP1 localization during cell cycle progression. Its main role could be the removal of PBP1 from the cell pole after pole maturation is completed. Also contributes to the recruitment of PBP1 to the division complex. Not essential for septum formation. The chain is Cell cycle protein GpsB from Streptococcus uberis (strain ATCC BAA-854 / 0140J).